An 86-amino-acid polypeptide reads, in one-letter code: Large ribosomal subunit protein eL43 (86 aa).

The segment at 38–59 adopts a C4-type zinc-finger fold; the sequence is CPVCGRKAVRRISTGIWQCQKC.

It belongs to the eukaryotic ribosomal protein eL43 family. Zn(2+) is required as a cofactor.

The protein is Large ribosomal subunit protein eL43 of Thermococcus onnurineus (strain NA1).